We begin with the raw amino-acid sequence, 844 residues long: Elongation factor 2 (844 aa).

The 239-residue stretch at 17–255 folds into the tr-type G domain; that stretch reads TNVRNMSVIA…LWGDNYFNPK (239 aa). 26-33 serves as a coordination point for GTP; that stretch reads AHVDHGKS. Phosphothreonine occurs at positions 57 and 59. GTP-binding positions include 160 to 163 and 215 to 217; these read NKVD and SGL. His-700 is modified (diphthamide).

The protein belongs to the TRAFAC class translation factor GTPase superfamily. Classic translation factor GTPase family. EF-G/EF-2 subfamily.

It is found in the cytoplasm. It carries out the reaction GTP + H2O = GDP + phosphate + H(+). Its function is as follows. Catalyzes the GTP-dependent ribosomal translocation step during translation elongation. During this step, the ribosome changes from the pre-translocational (PRE) to the post-translocational (POST) state as the newly formed A-site-bound peptidyl-tRNA and P-site-bound deacylated tRNA move to the P and E sites, respectively. Catalyzes the coordinated movement of the two tRNA molecules, the mRNA and conformational changes in the ribosome. The polypeptide is Elongation factor 2 (cot-3) (Neurospora crassa (strain ATCC 24698 / 74-OR23-1A / CBS 708.71 / DSM 1257 / FGSC 987)).